A 397-amino-acid polypeptide reads, in one-letter code: Carbamoyl phosphate synthase small chain (397 aa).

Positions 1-204 (MKHVLRKEKT…NAKLKEKIWH (204 aa)) are CPSase. L-glutamine contacts are provided by serine 57, glycine 252, and glycine 254. In terms of domain architecture, Glutamine amidotransferase type-1 spans 204–391 (HVVVYDFGVK…IKLMKKSYNS (188 aa)). Cysteine 280 functions as the Nucleophile in the catalytic mechanism. The L-glutamine site is built by leucine 281, glutamine 284, asparagine 322, and tyrosine 325. Residues histidine 364 and glutamate 366 contribute to the active site.

The protein belongs to the CarA family. Composed of two chains; the small (or glutamine) chain promotes the hydrolysis of glutamine to ammonia, which is used by the large (or ammonia) chain to synthesize carbamoyl phosphate. Tetramer of heterodimers (alpha,beta)4.

It catalyses the reaction hydrogencarbonate + L-glutamine + 2 ATP + H2O = carbamoyl phosphate + L-glutamate + 2 ADP + phosphate + 2 H(+). The enzyme catalyses L-glutamine + H2O = L-glutamate + NH4(+). Its pathway is amino-acid biosynthesis; L-arginine biosynthesis; carbamoyl phosphate from bicarbonate: step 1/1. It participates in pyrimidine metabolism; UMP biosynthesis via de novo pathway; (S)-dihydroorotate from bicarbonate: step 1/3. In terms of biological role, small subunit of the glutamine-dependent carbamoyl phosphate synthetase (CPSase). CPSase catalyzes the formation of carbamoyl phosphate from the ammonia moiety of glutamine, carbonate, and phosphate donated by ATP, constituting the first step of 2 biosynthetic pathways, one leading to arginine and/or urea and the other to pyrimidine nucleotides. The small subunit (glutamine amidotransferase) binds and cleaves glutamine to supply the large subunit with the substrate ammonia. The chain is Carbamoyl phosphate synthase small chain from Buchnera aphidicola subsp. Baizongia pistaciae (strain Bp).